A 504-amino-acid polypeptide reads, in one-letter code: Maturase K (504 aa).

The protein belongs to the intron maturase 2 family. MatK subfamily.

Its subcellular location is the plastid. The protein localises to the chloroplast. In terms of biological role, usually encoded in the trnK tRNA gene intron. Probably assists in splicing its own and other chloroplast group II introns. The polypeptide is Maturase K (Ochroma pyramidale (Balsa)).